We begin with the raw amino-acid sequence, 101 residues long: Small ribosomal subunit protein uS14 (101 aa).

The protein belongs to the universal ribosomal protein uS14 family. Part of the 30S ribosomal subunit. Contacts proteins S3 and S10.

Binds 16S rRNA, required for the assembly of 30S particles and may also be responsible for determining the conformation of the 16S rRNA at the A site. This Paramagnetospirillum magneticum (strain ATCC 700264 / AMB-1) (Magnetospirillum magneticum) protein is Small ribosomal subunit protein uS14.